Consider the following 129-residue polypeptide: Large ribosomal subunit protein bL12 (129 aa).

The protein belongs to the bacterial ribosomal protein bL12 family. As to quaternary structure, homodimer. Part of the ribosomal stalk of the 50S ribosomal subunit. Forms a multimeric L10(L12)X complex, where L10 forms an elongated spine to which 2 to 4 L12 dimers bind in a sequential fashion. Binds GTP-bound translation factors.

Forms part of the ribosomal stalk which helps the ribosome interact with GTP-bound translation factors. Is thus essential for accurate translation. In Micrococcus luteus (strain ATCC 4698 / DSM 20030 / JCM 1464 / CCM 169 / CCUG 5858 / IAM 1056 / NBRC 3333 / NCIMB 9278 / NCTC 2665 / VKM Ac-2230) (Micrococcus lysodeikticus), this protein is Large ribosomal subunit protein bL12.